We begin with the raw amino-acid sequence, 267 residues long: 4-hydroxy-tetrahydrodipicolinate reductase (267 aa).

11–16 (GAAGRM) lines the NAD(+) pocket. Arg-39 lines the NADP(+) pocket. Residues 100–102 (GTT) and 126–129 (APNF) each bind NAD(+). His-156 functions as the Proton donor/acceptor in the catalytic mechanism. Residue His-157 participates in (S)-2,3,4,5-tetrahydrodipicolinate binding. The active-site Proton donor is the Lys-160. 166-167 (GT) contributes to the (S)-2,3,4,5-tetrahydrodipicolinate binding site.

This sequence belongs to the DapB family.

The protein localises to the cytoplasm. It catalyses the reaction (S)-2,3,4,5-tetrahydrodipicolinate + NAD(+) + H2O = (2S,4S)-4-hydroxy-2,3,4,5-tetrahydrodipicolinate + NADH + H(+). The catalysed reaction is (S)-2,3,4,5-tetrahydrodipicolinate + NADP(+) + H2O = (2S,4S)-4-hydroxy-2,3,4,5-tetrahydrodipicolinate + NADPH + H(+). Its pathway is amino-acid biosynthesis; L-lysine biosynthesis via DAP pathway; (S)-tetrahydrodipicolinate from L-aspartate: step 4/4. In terms of biological role, catalyzes the conversion of 4-hydroxy-tetrahydrodipicolinate (HTPA) to tetrahydrodipicolinate. This is 4-hydroxy-tetrahydrodipicolinate reductase from Moorella thermoacetica (strain ATCC 39073 / JCM 9320).